The following is a 461-amino-acid chain: MRVLIKNGIVVNADGQAKQDLLIESGIVRQLGTDISPQLPCEEIDASGCYVFPGGVDVHTHFNIDVGIARSCDDFFTGTRAAACGGTTTIIDHMGFGPNGCRLRHQLEVYRGYAAHKAVIDYSFHGVIQHINHAILDEIPMMVEEGLSSFKLYLTYQYKLNDDEVLQALRRLHESGALTTVHPENDAAIASKRAEFIAAGLTAPRYHALSRPLECEAEAIARMINLAQIAGNAPLYIVHLSNGLGLDYLRLARANHQPVWVETCPQYLLLDERSYDTEDGMKFILSPPLRNVREQDKLWCGISDGAIDVVATDHCTFSMAQRLQISKGDFSRCPNGLPGVENRMQLLFSSGVMTGRISLERFVELTSAMPARLFGLWPQKGILAPGSDGDVVIIDPRQSQQIQHRHLHDNADYSPWEGFTCQGAIVRTLSRGETIFCDGTFTGKAGRGRFLRRKPFVPPVL.

The a divalent metal cation site is built by H59, H61, and K151. K151 is modified (N6-carboxylysine). Y156 is a binding site for substrate. H182 and H239 together coordinate a divalent metal cation. Substrate is bound at residue S286. D313 contributes to the a divalent metal cation binding site. N335 provides a ligand contact to substrate.

It belongs to the metallo-dependent hydrolases superfamily. Hydantoinase/dihydropyrimidinase family. In terms of assembly, homotetramer. A divalent metal cation is required as a cofactor. Carboxylation allows a single lysine to coordinate two divalent metal cations.

The catalysed reaction is D-5-phenylhydantoin + H2O = N-carbamoyl-D-phenylglycine + H(+). Catalyzes the stereospecific hydrolysis of the cyclic amide bond of D-hydantoin derivatives with an aromatic side chains at the 5'-position. Has no activity on dihydropyrimidines. The physiological function is unknown. This Escherichia coli (strain UTI89 / UPEC) protein is D-phenylhydantoinase.